The following is a 355-amino-acid chain: LIM/homeobox protein lim-4 (355 aa).

2 consecutive LIM zinc-binding domains span residues 96–155 (VICT…THVT) and 166–228 (PKCA…LVEG). Residues 239–298 (TKRVRTTFAEDQLSVLQTYFNRDSNPDGADLEKIASMTGLSKRVTQVWFQNSRARQKKWH) constitute a DNA-binding region (homeobox). Residues 291–336 (RARQKKWHQKSEGDNGDSQRSSVGPSSPSQKSDSSSEMMYPTSVTT) are disordered. Low complexity predominate over residues 306-326 (GDSQRSSVGPSSPSQKSDSSS).

Interacts with transcription factor sox-2. Expressed in the AWB sensory neurons and in one RME motor neuron (RMEV), two RMD motor neurons (RMDL and RMDR), the RID, RIV, SAA and SIA interneurons and the SMB sensory/inter/motor neurons.

It is found in the nucleus. Functionally, transcription factor that binds to the promoter of target genes. Regulates genes involved in serotonin synthesis and release in serotonergic ADF neurons. Involved in specification of neuron cell fate, olfactory receptor expression, locomotion, and foraging behavior. Required in AWB olfactory neurons to repress AWC cell fate and promote the AWB cell fate during early development. Cooperates with additional factors to direct the differentiation of the olfactory neurons, functioning with the transcription factor sox-2 to suppress AWC terminal differentiation and promote AWB neuron differentiation. Involved in regulating terminal specification and maintenance of the SMB sensory/inter/motor neurons. Plays a role in regulation of RID motor neuron differentiation, but is dispensable for motor axon outgrowth in the dorsal nerve cord. May regulate its own expression. This chain is LIM/homeobox protein lim-4, found in Caenorhabditis elegans.